The primary structure comprises 562 residues: Zinc finger protein 579 (562 aa).

Positions 1–11 (MDPQPPPPAQG) are enriched in pro residues. The segment at 1 to 43 (MDPQPPPPAQGSPPHRGRGRGRGRGRGRGRGRGRGGAGAPRAP) is disordered. Residues 15 to 33 (HRGRGRGRGRGRGRGRGRG) are compositionally biased toward basic residues. 3 consecutive C2H2-type zinc fingers follow at residues 44 to 66 (LPCP…RLSH), 72 to 94 (HACP…LRGH), and 100 to 123 (LRCA…AQEH). Omega-N-methylarginine is present on arginine 92. Positions 139–203 (TAEPSWGPQD…SESEEAEAGA (65 aa)) are disordered. Phosphoserine is present on residues serine 194 and serine 196. 2 C2H2-type zinc fingers span residues 270–292 (HQCS…RLVH) and 298–320 (FVCP…RRVH). Residues 327–379 (APLPAAGKKDDKASGARNSAKGPEGGEGAECGGASEGGEGQNGGDAAPARPPA) form a disordered region. Gly residues predominate over residues 349–369 (PEGGEGAECGGASEGGEGQNG). 3 consecutive C2H2-type zinc fingers follow at residues 384 to 406 (FWCP…GVTH), 412 to 434 (FQCV…AQVH), and 441 to 463 (HPCP…QRCH). The interval 477-562 (QAQAPTSPPP…HLRGLGGLAS (86 aa)) is disordered. 2 stretches are compositionally biased toward pro residues: residues 482–491 (TSPPPPPPPL) and 512–525 (PSPG…PAPP). Position 483 is a phosphoserine (serine 483).

This sequence belongs to the krueppel C2H2-type zinc-finger protein family.

The protein resides in the nucleus. May be involved in transcriptional regulation. In Homo sapiens (Human), this protein is Zinc finger protein 579 (ZNF579).